We begin with the raw amino-acid sequence, 572 residues long: Far upstream element-binding protein 3 (572 aa).

Alanine 2 is subject to N-acetylalanine. Residues lysine 15 and lysine 57 each participate in a glycyl lysine isopeptide (Lys-Gly) (interchain with G-Cter in SUMO2) cross-link. Residue threonine 76 is modified to Phosphothreonine. KH domains follow at residues 77–141 (VITE…KRLL), 162–228 (STIQ…REMV), 253–317 (GGSI…AHII), and 354–421 (VQEI…RQLI). A Phosphoserine modification is found at serine 296. The disordered stretch occupies residues 426–521 (GGTNLGAPGA…SQPNYSKAWE (96 aa)). Positions 496-514 (QQPTQQVPSQQSQPQSSQP) are enriched in low complexity. Phosphoserine occurs at positions 539 and 569.

Detected in a number of cell lines.

The protein resides in the nucleus. Functionally, may interact with single-stranded DNA from the far-upstream element (FUSE). May activate gene expression. The sequence is that of Far upstream element-binding protein 3 (FUBP3) from Homo sapiens (Human).